Here is a 300-residue protein sequence, read N- to C-terminus: 33 kDa chaperonin (300 aa).

2 disulfide bridges follow: Cys-247/Cys-249 and Cys-280/Cys-283.

Belongs to the HSP33 family. Under oxidizing conditions two disulfide bonds are formed involving the reactive cysteines. Under reducing conditions zinc is bound to the reactive cysteines and the protein is inactive.

It is found in the cytoplasm. Functionally, redox regulated molecular chaperone. Protects both thermally unfolding and oxidatively damaged proteins from irreversible aggregation. Plays an important role in the bacterial defense system toward oxidative stress. The chain is 33 kDa chaperonin from Prochlorococcus marinus (strain MIT 9515).